A 387-amino-acid polypeptide reads, in one-letter code: Succinate--CoA ligase [ADP-forming] subunit beta (387 aa).

An ATP-grasp domain is found at 9 to 245 (KDLLESYGLK…KSQENAKELK (237 aa)). Residues K46, 53–55 (GRG), E100, Y103, and E108 contribute to the ATP site. The Mg(2+) site is built by N200 and D214. Substrate-binding positions include N265 and 322 to 324 (GIV).

This sequence belongs to the succinate/malate CoA ligase beta subunit family. Heterotetramer of two alpha and two beta subunits. Requires Mg(2+) as cofactor.

The enzyme catalyses succinate + ATP + CoA = succinyl-CoA + ADP + phosphate. The catalysed reaction is GTP + succinate + CoA = succinyl-CoA + GDP + phosphate. Its pathway is carbohydrate metabolism; tricarboxylic acid cycle; succinate from succinyl-CoA (ligase route): step 1/1. Succinyl-CoA synthetase functions in the citric acid cycle (TCA), coupling the hydrolysis of succinyl-CoA to the synthesis of either ATP or GTP and thus represents the only step of substrate-level phosphorylation in the TCA. The beta subunit provides nucleotide specificity of the enzyme and binds the substrate succinate, while the binding sites for coenzyme A and phosphate are found in the alpha subunit. The protein is Succinate--CoA ligase [ADP-forming] subunit beta of Francisella tularensis subsp. novicida (strain U112).